Consider the following 430-residue polypeptide: MGEAAVAEGPCPLLEDSFTRFSSQSNVYGLAGGADGRGELLAATLKGKVLGFRYQDLRQKIRPVAKELQFNYIPVDAEIVSIDTFNKSPPKRGLVVGITFIKDSGDKGSPFLNIYCDYEPGSEYNLDSIAESCLNLELQFTPFQLCHAEVQVGDQLETVFLLSGNDPAIHLYKENEGLHQFEEQPVENLFPELTNLTSSVLWLDVHNLPGSSQRLSALGCQSGYVRVAHVDQKNQEILQTWTIQQDGPISRVIVFSLSASEATQDSPQQEGYSLLVASMLEPAVVYWDLLNKGLDDQLLLPGSDQFDSVLCGLVTDVDLDGQLEVLVATYGQELLCYKYRGLPEDSRGFRLLWRRSFASPLLAMAHVDLTGDGLRELAVISLKGVHILQHSLIQASELVLTRLRHQVEQRKHQQGLGDRVGPRPVEHPAS.

The segment at 410–430 (RKHQQGLGDRVGPRPVEHPAS) is disordered. The span at 420 to 430 (VGPRPVEHPAS) shows a compositional bias: basic and acidic residues.

In terms of assembly, part of the KICSTOR complex composed of KPTN, ITFG2, KICS2 and SZT2. SZT2 probably serves as a link between the other three proteins in the KICSTOR complex and mediates the direct interaction with the GATOR1 complex. May associate with F-actin filaments.

It is found in the lysosome membrane. It localises to the cell projection. The protein resides in the lamellipodium. The protein localises to the stereocilium. As part of the KICSTOR complex functions in the amino acid-sensing branch of the TORC1 signaling pathway. Recruits, in an amino acid-independent manner, the GATOR1 complex to the lysosomal membranes and allows its interaction with GATOR2 and the RAG GTPases. Functions upstream of the RAG GTPases and is required to negatively regulate mTORC1 signaling in absence of amino acids. In absence of the KICSTOR complex mTORC1 is constitutively localized to the lysosome and activated. The KICSTOR complex is also probably involved in the regulation of mTORC1 by glucose. In Mus musculus (Mouse), this protein is KICSTOR complex protein kaptin.